The following is a 408-amino-acid chain: Glutamate N-acetyltransferase (408 aa).

Positions 150, 176, 189, 271, 403, and 408 each coordinate substrate. The active-site Nucleophile is the threonine 189.

This sequence belongs to the ArgJ family. Heterotetramer of two alpha and two beta chains.

The protein localises to the cytoplasm. The enzyme catalyses N(2)-acetyl-L-ornithine + L-glutamate = N-acetyl-L-glutamate + L-ornithine. Its pathway is amino-acid biosynthesis; L-arginine biosynthesis; L-ornithine and N-acetyl-L-glutamate from L-glutamate and N(2)-acetyl-L-ornithine (cyclic): step 1/1. In terms of biological role, catalyzes the transfer of the acetyl group from N(2)-acetylornithine to glutamate, forming N-acetylglutamate and L-ornithine. In Methanococcus maripaludis (strain C6 / ATCC BAA-1332), this protein is Glutamate N-acetyltransferase.